The primary structure comprises 358 residues: Trace amine-associated receptor 7d (358 aa).

At 1–47 the chain is on the extracellular side; it reads MATGDDSFPWDQDSILSRDLFSATSTELCYENLNRSCVRSPYSPGPR. N-linked (GlcNAc...) asparagine glycosylation is present at Asn34. 2 disulfide bridges follow: Cys37–Cys201 and Cys120–Cys205. The chain crosses the membrane as a helical span at residues 48–68; the sequence is LILYAVFGFGAVLAVCGNLLV. Residues 69 to 83 lie on the Cytoplasmic side of the membrane; sequence MTSILHFRQLHSPAN. Residues 84-104 traverse the membrane as a helical segment; the sequence is FLVASLACADFLVGVMVMPFS. Topologically, residues 105-121 are extracellular; that stretch reads MVRSVEGCWYFGESYCK. A helical membrane pass occupies residues 122 to 143; the sequence is FHSCFEGSFCYSSLFHLCFISV. The Cytoplasmic segment spans residues 144-166; the sequence is DRYIAVSDPLTYPTRFTASVSGK. A helical transmembrane segment spans residues 167-187; the sequence is CITFSWLLSIIYSFSLLYTGA. The Extracellular segment spans residues 188 to 212; that stretch reads NDAGLEDLVSALTCVGGCQIAVNQT. An N-linked (GlcNAc...) asparagine glycan is attached at Asn210. Residues 213–233 form a helical membrane-spanning segment; it reads WVFINFLLFLIPTLVMITVYS. Residues 234-274 lie on the Cytoplasmic side of the membrane; that stretch reads KIFLIAKQQAQNIEKMSKQTARASESYKDRVTKRERKAAKT. A helical transmembrane segment spans residues 275–295; the sequence is LGIAVAAFLLSWLPYFIDSII. Residues 296–309 are Extracellular-facing; sequence DAFLGFITPTYVYE. A helical transmembrane segment spans residues 310–333; the sequence is ILVWIVYYNSAMNPLIYAFFYSWF. Residues 334–358 lie on the Cytoplasmic side of the membrane; sequence RKAIKLIVSGKILRENSSTTNLFPE.

The protein belongs to the G-protein coupled receptor 1 family. Specifically expressed in neurons of the olfactory epithelium.

The protein localises to the cell membrane. Olfactory receptor specific for trace amines, such as beta-phenylethylamine (beta-PEA). Trace amine compounds are enriched in animal body fluids and act on trace amine-associated receptors (TAARs) to elicit both intraspecific and interspecific innate behaviors. Ligand-binding causes a conformation change that triggers signaling via G(s)-class of G alpha proteins (GNAL or GNAS). In Mus musculus (Mouse), this protein is Trace amine-associated receptor 7d.